The primary structure comprises 141 residues: ATP synthase epsilon chain (141 aa).

The protein belongs to the ATPase epsilon chain family. In terms of assembly, F-type ATPases have 2 components, CF(1) - the catalytic core - and CF(0) - the membrane proton channel. CF(1) has five subunits: alpha(3), beta(3), gamma(1), delta(1), epsilon(1). CF(0) has three main subunits: a, b and c.

It localises to the cell inner membrane. Its function is as follows. Produces ATP from ADP in the presence of a proton gradient across the membrane. In Bordetella petrii (strain ATCC BAA-461 / DSM 12804 / CCUG 43448), this protein is ATP synthase epsilon chain.